The chain runs to 272 residues: Shikimate dehydrogenase (NADP(+)) (272 aa).

Residues 14–16 (SLS) and T61 each bind shikimate. Residue K65 is the Proton acceptor of the active site. D102 contacts shikimate. NADP(+) contacts are provided by residues 127–131 (GAGGA), 151–156 (NRTPSK), and L215. Y217 is a shikimate binding site. G239 contacts NADP(+).

Belongs to the shikimate dehydrogenase family. In terms of assembly, homodimer.

It catalyses the reaction shikimate + NADP(+) = 3-dehydroshikimate + NADPH + H(+). The protein operates within metabolic intermediate biosynthesis; chorismate biosynthesis; chorismate from D-erythrose 4-phosphate and phosphoenolpyruvate: step 4/7. In terms of biological role, involved in the biosynthesis of the chorismate, which leads to the biosynthesis of aromatic amino acids. Catalyzes the reversible NADPH linked reduction of 3-dehydroshikimate (DHSA) to yield shikimate (SA). In Coxiella burnetii (strain CbuG_Q212) (Coxiella burnetii (strain Q212)), this protein is Shikimate dehydrogenase (NADP(+)).